The sequence spans 570 residues: Fibropellin-3 (570 aa).

The signal sequence occupies residues 1-17 (MKVSLLAVLLLSIVAAT). An EGF-like 1 domain is found at 18–55 (YGQGECGSNPCENGSVCRDGEGTYICECQMGYDGQNCD). 4 cysteine pairs are disulfide-bonded: C23/C34, C28/C43, C45/C54, and C62/C88. N30 carries N-linked (GlcNAc...) asparagine glycosylation. The region spanning 62–175 (CGYNIFESTG…RKGFRITFSS (114 aa)) is the CUB domain. An N-linked (GlcNAc...) asparagine glycan is attached at N136. The EGF-like 2; calcium-binding domain maps to 176–212 (DGDDCTPNPCLNGATCVDQVNDYQCICAPGFTGDNCE). 22 cysteine pairs are disulfide-bonded: C180/C191, C185/C200, C202/C211, C218/C229, C223/C238, C240/C249, C256/C267, C261/C276, C278/C287, C294/C305, C299/C314, C316/C325, C332/C343, C337/C352, C354/C363, C370/C381, C375/C390, C392/C401, C408/C419, C413/C428, C430/C439, and C445/C521. Residues 214–250 (DIDECASAPCRNGGACVDQVNGYTCNCIPGFNGVNCE) enclose the EGF-like 3; calcium-binding domain. The EGF-like 4; calcium-binding domain maps to 252–288 (NINECASIPCLNGGICVDGINQFACTCLPGYTGILCE). Residues 290–326 (DINECASSPCQNGGSCTDAVNRYTCDCRAGFTGSNCE) enclose the EGF-like 5; calcium-binding domain. The EGF-like 6; calcium-binding domain occupies 328 to 364 (NINECASSPCLNGGSCLDGVDGYVCQCLPNYTGTHCE). N357 carries an N-linked (GlcNAc...) asparagine glycan. Residues 366–402 (SLDACASLPCQNGGVCTNVGGDYVCECLPGYTGINCE) form the EGF-like 7 domain. In terms of domain architecture, EGF-like 8; calcium-binding spans 404-440 (DINECASLPCQNGGECINGIAMYICQCRQGYAGVNCE). The Avidin-like domain occupies 443–562 (GFCDLEGVWF…GQDKWTRYEQ (120 aa)).

Homotetramer.

It localises to the secreted. Its subcellular location is the extracellular space. Its function is as follows. Forms the apical lamina, a component of the extracellular matrix. The protein is Fibropellin-3 (EGF3) of Strongylocentrotus purpuratus (Purple sea urchin).